The sequence spans 155 residues: Protein-export protein SecB (155 aa).

It belongs to the SecB family. Homotetramer, a dimer of dimers. One homotetramer interacts with 1 SecA dimer.

The protein resides in the cytoplasm. One of the proteins required for the normal export of preproteins out of the cell cytoplasm. It is a molecular chaperone that binds to a subset of precursor proteins, maintaining them in a translocation-competent state. It also specifically binds to its receptor SecA. The chain is Protein-export protein SecB from Psychromonas ingrahamii (strain DSM 17664 / CCUG 51855 / 37).